The following is a 112-amino-acid chain: Colipase (112 aa).

The N-terminal stretch at 1-17 is a signal peptide; the sequence is MKVLVVLLVTLVAVAYA. Positions 18–22 are cleaved as a propeptide — enterostatin, activation peptide; sequence APGPR. Cystine bridges form between cysteine 34–cysteine 45, cysteine 40–cysteine 56, cysteine 44–cysteine 78, cysteine 66–cysteine 86, and cysteine 80–cysteine 104.

This sequence belongs to the colipase family. Forms a 1:1 stoichiometric complex with pancreatic lipase. Expressed by the pancreas.

Its subcellular location is the secreted. In terms of biological role, colipase is a cofactor of pancreatic lipase. It allows the lipase to anchor itself to the lipid-water interface. Without colipase the enzyme is washed off by bile salts, which have an inhibitory effect on the lipase. Functionally, enterostatin has a biological activity as a satiety signal. The protein is Colipase of Rattus norvegicus (Rat).